The chain runs to 467 residues: Na(+)/H(+) exchange regulatory cofactor-like protein nrfl-1 (467 aa).

2 PDZ domains span residues 12 to 94 and 143 to 225; these read RLCV…ISEE and LAEL…ASED. The tract at residues 344 to 429 is disordered; it reads MSSHTEVLPP…ASSTSGYDDD (86 aa). The span at 407–425 shows a compositional bias: polar residues; sequence PSPLSNGSSHGYAASSTSG.

Interacts (via PDZ 2 domain) with aat-6 (via PDZ-binding motif); the interaction sequesters aat-6 to the apical cell membrane of intestinal cells. Post-translationally, phosphorylated. In terms of tissue distribution, expressed in the excretory canal and intestine. Expressed on the apical cell membrane of intestinal cells (at protein level).

The protein resides in the cell projection. Its subcellular location is the microvillus membrane. It is found in the apical cell membrane. Scaffold protein that connects plasma membrane proteins with members of the ezrin/moesin/radixin family and thereby helps to link them to the actin cytoskeleton and to regulate their surface expression. Anchors the amino acid transporter protein aat-6 to the apical cell membrane of intestinal cells, particularly in older animals, in order to maintain amino acid homeostasis. May play a role in promoting fertility. This is Na(+)/H(+) exchange regulatory cofactor-like protein nrfl-1 from Caenorhabditis elegans.